Here is a 273-residue protein sequence, read N- to C-terminus: DnaJ homolog subfamily C member 27 (273 aa).

GTP-binding positions include 23–30 (GNAEVGKS), 71–75 (DMAGH), and 134–137 (NKVD). Positions 217 to 273 (DSWDMLGVKPGATREEVNKAYRKLAVLLHPDKCVAPGSEDAFKAVVNARTSLLKNIK) constitute a J domain.

It belongs to the small GTPase superfamily. Rab family.

It is found in the nucleus. Functionally, GTPase possibly involved in regulation of the MEK/ERK pathway. The polypeptide is DnaJ homolog subfamily C member 27 (dnajc27) (Danio rerio (Zebrafish)).